We begin with the raw amino-acid sequence, 375 residues long: N5-carboxyaminoimidazole ribonucleotide synthase (375 aa).

Residues arginine 108, lysine 148, 153–159 (GYDGKGQ), 183–186 (EQYL), glutamate 191, histidine 214, and 266–267 (NE) contribute to the ATP site. The region spanning 112-296 (KQTLLEANTQ…QFDTHILAIT (185 aa)) is the ATP-grasp domain.

It belongs to the PurK/PurT family. As to quaternary structure, homodimer.

It carries out the reaction 5-amino-1-(5-phospho-beta-D-ribosyl)imidazole + hydrogencarbonate + ATP = 5-carboxyamino-1-(5-phospho-D-ribosyl)imidazole + ADP + phosphate + 2 H(+). It participates in purine metabolism; IMP biosynthesis via de novo pathway; 5-amino-1-(5-phospho-D-ribosyl)imidazole-4-carboxylate from 5-amino-1-(5-phospho-D-ribosyl)imidazole (N5-CAIR route): step 1/2. Its function is as follows. Catalyzes the ATP-dependent conversion of 5-aminoimidazole ribonucleotide (AIR) and HCO(3)(-) to N5-carboxyaminoimidazole ribonucleotide (N5-CAIR). The chain is N5-carboxyaminoimidazole ribonucleotide synthase from Staphylococcus epidermidis (strain ATCC 35984 / DSM 28319 / BCRC 17069 / CCUG 31568 / BM 3577 / RP62A).